The chain runs to 549 residues: Nucleoporin nup61 (549 aa).

Over residues 1–32 (MSKRGADHQLTKDQDDSDDDRHGPVEVPKEAS) the composition is skewed to basic and acidic residues. Disordered regions lie at residues 1 to 57 (MSKR…VSSP), 133 to 193 (IEKK…GFSA), and 207 to 438 (FTPK…NEDS). Ser17 carries the post-translational modification Phosphoserine. Positions 40-50 (KIAKPKSRKRP) are enriched in basic residues. Residues 141-165 (QPTSNAVVSEVNPQQQKSQDSSSFV) show a composition bias toward polar residues. Basic and acidic residues-rich tracts occupy residues 170–180 (ASSEKEDKEKP) and 217–228 (SATEAEAKEKET). Positions 229–244 (SSNQTATGTAATTTNQ) are enriched in low complexity. 2 stretches are compositionally biased toward basic and acidic residues: residues 282 to 310 (ASKE…KSEN) and 328 to 339 (KPIKFDTPEKKF). A Phosphoserine modification is found at Ser347. Positions 407–421 (SEQEEKENGNDETRS) are enriched in basic and acidic residues. In terms of domain architecture, RanBD1 spans 416–549 (NDETRSNDSL…NEKKVSKSEN (134 aa)).

It localises to the nucleus. The protein localises to the nuclear pore complex. Functionally, functions as a component of the nuclear pore complex (NPC). NPC components, collectively referred to as nucleoporins (NUPs), can play the role of both NPC structural components and of docking or interaction partners for transiently associated nuclear transport factors. Active directional transport is assured by both, a Phe-Gly (FG) repeat affinity gradient for these transport factors across the NPC and a transport cofactor concentration gradient across the nuclear envelope. May play a role in mitotic spindle formation and/or function. The protein is Nucleoporin nup61 (nup61) of Schizosaccharomyces pombe (strain 972 / ATCC 24843) (Fission yeast).